The chain runs to 718 residues: Probable trehalose-phosphatase (718 aa).

The tract at residues 449 to 470 (LSMDQTGHKKVDAKKKPGIRKK) is disordered. Basic residues predominate over residues 459-470 (VDAKKKPGIRKK).

It in the N-terminal section; belongs to the glycosyltransferase 20 family. In the C-terminal section; belongs to the trehalose phosphatase family.

The catalysed reaction is alpha,alpha-trehalose 6-phosphate + H2O = alpha,alpha-trehalose + phosphate. The polypeptide is Probable trehalose-phosphatase (Encephalitozoon cuniculi (strain GB-M1) (Microsporidian parasite)).